Consider the following 189-residue polypeptide: RPW8-like protein 1 (189 aa).

In terms of domain architecture, RPW8 spans Met-1 to Glu-153. The helical transmembrane segment at Leu-7–Ile-24 threads the bilayer. Coiled-coil stretches lie at residues Phe-65 to Arg-92 and Asp-126 to Gln-147. An N-linked (GlcNAc...) asparagine glycan is attached at Asn-177.

It belongs to the plant RPW8 protein family.

The protein localises to the membrane. In terms of biological role, probable disease resistance (R) protein. This Arabidopsis thaliana (Mouse-ear cress) protein is RPW8-like protein 1.